Reading from the N-terminus, the 116-residue chain is uncharacterized protein (116 aa).

An N-acetylmuramoyl-L-alanine amidase domain is found at 2 to 73; that stretch reads DGSVGTGRQV…PKALICGHRD (72 aa).

The protein to phage T3 and T7 N-acetylmuramoyl-L-alanine amidases.

This is an uncharacterized protein from Haemophilus influenzae (strain ATCC 51907 / DSM 11121 / KW20 / Rd).